The chain runs to 210 residues: Glutathione S-transferase P (210 aa).

The 80-residue stretch at 2 to 81 (PPYTIVYFPV…HLGRSLGLYG (80 aa)) folds into the GST N-terminal domain. Tyr-4 bears the Phosphotyrosine; by EGFR mark. Residues Tyr-8, Arg-14, Trp-39, Lys-45, 52–53 (QL), and 65–66 (QS) each bind glutathione. Residues 83-204 (DQKEAALVDM…SSPDHVNRPI (122 aa)) enclose the GST C-terminal domain. An N6-succinyllysine mark is found at Lys-103 and Lys-116. At Lys-128 the chain carries N6-acetyllysine.

It belongs to the GST superfamily. Pi family. In terms of assembly, homodimer. Interacts with CDK5.

It localises to the cytoplasm. It is found in the mitochondrion. The protein localises to the nucleus. The catalysed reaction is RX + glutathione = an S-substituted glutathione + a halide anion + H(+). The enzyme catalyses prostaglandin J2 + glutathione = prostaglandin J2-S-(R)-glutathione. It catalyses the reaction prostaglandin J2 + glutathione = prostaglandin J2-S-(S)-glutathione. It carries out the reaction prostaglandin A2 + glutathione = prostaglandin A2-S-(S)-glutathione. The catalysed reaction is 11(S)-hydroxy-14(S),15(S)-epoxy-(5Z,8Z,12E)-eicosatrienoate + glutathione = (11S,15S)-dihydroxy-14(R)-S-glutathionyl-(5Z,8Z,12E)-eicosatrienoate. In terms of biological role, conjugation of reduced glutathione to a wide number of exogenous and endogenous hydrophobic electrophiles. Involved in the formation of glutathione conjugates of both prostaglandin A2 (PGA2) and prostaglandin J2 (PGJ2). Participates in the formation of novel hepoxilin regioisomers. Negatively regulates CDK5 activity via p25/p35 translocation to prevent neurodegeneration. This chain is Glutathione S-transferase P (GSTP1), found in Mesocricetus auratus (Golden hamster).